The primary structure comprises 492 residues: Trigger factor (492 aa).

The PPIase FKBP-type domain maps to 169 to 254 (GDRVSIDYVG…VKEVSKPGEL (86 aa)). The tract at residues 441–492 (LMADDEDAETTTKAKPAKKAAAKKAEAKANEDEAEEPKKKAAPKKKAAKDAE) is disordered. The segment covering 463-479 (KKAEAKANEDEAEEPKK) has biased composition (basic and acidic residues). A compositionally biased stretch (basic residues) spans 480–492 (KAAPKKKAAKDAE).

Belongs to the FKBP-type PPIase family. Tig subfamily.

Its subcellular location is the cytoplasm. The catalysed reaction is [protein]-peptidylproline (omega=180) = [protein]-peptidylproline (omega=0). Functionally, involved in protein export. Acts as a chaperone by maintaining the newly synthesized protein in an open conformation. Functions as a peptidyl-prolyl cis-trans isomerase. The chain is Trigger factor from Mesorhizobium japonicum (strain LMG 29417 / CECT 9101 / MAFF 303099) (Mesorhizobium loti (strain MAFF 303099)).